The primary structure comprises 203 residues: Molybdenum cofactor guanylyltransferase (203 aa).

GTP is bound by residues 12 to 14 (LAG), lysine 25, asparagine 53, aspartate 71, and aspartate 101. Residue aspartate 101 participates in Mg(2+) binding.

It belongs to the MobA family. Monomer. It depends on Mg(2+) as a cofactor.

The protein resides in the cytoplasm. It catalyses the reaction Mo-molybdopterin + GTP + H(+) = Mo-molybdopterin guanine dinucleotide + diphosphate. Functionally, transfers a GMP moiety from GTP to Mo-molybdopterin (Mo-MPT) cofactor (Moco or molybdenum cofactor) to form Mo-molybdopterin guanine dinucleotide (Mo-MGD) cofactor. In Cupriavidus metallidurans (strain ATCC 43123 / DSM 2839 / NBRC 102507 / CH34) (Ralstonia metallidurans), this protein is Molybdenum cofactor guanylyltransferase.